A 956-amino-acid chain; its full sequence is ATPase 11, plasma membrane-type (956 aa).

At 1-65 (MGDKEEVLEA…EKKESKFLKF (65 aa)) the chain is on the cytoplasmic side. A helical membrane pass occupies residues 66-85 (LGFMWNPLSWVMEAAAIMAI). Residues 86–97 (ALANGGGKPPDW) lie on the Extracellular side of the membrane. The helical transmembrane segment at 98–118 (QDFVGIITLLVINSTISFIEE) threads the bilayer. Residues 119-247 (NNAGNAAAAL…GHFQQVLTAI (129 aa)) are Cytoplasmic-facing. Residues 248-268 (GNFCICSIAVGMIIEIVVMYP) form a helical membrane-spanning segment. The Extracellular portion of the chain corresponds to 269-277 (IQHRAYRPG). A helical transmembrane segment spans residues 278–295 (IDNLLVLLIGGIPIAMPT). The Cytoplasmic portion of the chain corresponds to 296–647 (VLSVTMAIGS…TSRAIFQRMK (352 aa)). Catalysis depends on D333, which acts as the 4-aspartylphosphate intermediate. Residues D592 and D596 each contribute to the Mg(2+) site. A helical membrane pass occupies residues 648–669 (NYTIYAVSITIRIVLGFMLLAL). Residues 670–674 (IWKFD) lie on the Extracellular side of the membrane. A helical membrane pass occupies residues 675 to 697 (FPPFMVLIIAILNDGTIMTISKD). At 698–713 (RVKPSPLPDSWKLSEI) the chain is on the cytoplasmic side. Residues 714–734 (FATGVVFGSYMAMMTVIFFWA) form a helical membrane-spanning segment. At 735–759 (AYKTDFFPRTFGVSTLEKTAHDDFR) the chain is on the extracellular side. The chain crosses the membrane as a helical span at residues 760 to 780 (KLASAIYLQVSIISQALIFVT). Over 781–792 (RSRSWSYVERPG) the chain is Cytoplasmic. A helical membrane pass occupies residues 793 to 813 (MLLVVAFILAQLVATLIAVYA). The Extracellular portion of the chain corresponds to 814–821 (NWSFAAIE). A helical membrane pass occupies residues 822 to 842 (GIGWGWAGVIWLYNIVFYIPL). Topologically, residues 843-956 (DIIKFLIRYA…IETIQQAYTV (114 aa)) are cytoplasmic. Position 889 is a phosphothreonine (T889). Residue S938 is modified to Phosphoserine. The interval 954 to 956 (YTV) is interaction with 14-3-3 proteins. T955 carries the phosphothreonine modification.

Belongs to the cation transport ATPase (P-type) (TC 3.A.3) family. Type IIIA subfamily. As to quaternary structure, binds to 14-3-3 proteins. The binding is induced by phosphorylation of Thr-955. Binding to 14-3-3 proteins activates the H(+)-ATPase. As to expression, expressed in guard cells, mesophyll cells, leaves and roots.

The protein localises to the membrane. It carries out the reaction ATP + H2O + H(+)(in) = ADP + phosphate + 2 H(+)(out). The plasma membrane H(+) ATPase of plants and fungi generates a proton gradient that drives the active transport of nutrients by H(+)-symport. The resulting external acidification and/or internal alkinization may mediate growth responses. In Arabidopsis thaliana (Mouse-ear cress), this protein is ATPase 11, plasma membrane-type (AHA11).